Here is an 858-residue protein sequence, read N- to C-terminus: Cone cGMP-specific 3',5'-cyclic phosphodiesterase subunit alpha' (858 aa).

2 consecutive GAF domains span residues 75 to 224 and 256 to 433; these read TPEQ…SIIL and DVER…GWSL. Residues Ser97, Asp116, 169-172, and Thr176 each bind 3',5'-cyclic GMP; that span reads DKQT. The PDEase domain occupies 486-819; sequence EEKQLVAILK…VEWKSLADEY (334 aa). Catalysis depends on His562, which acts as the Proton donor. A divalent metal cation contacts are provided by His566, His602, Asp603, and Asp723. Positions 830–852 are enriched in basic and acidic residues; that stretch reads AKKQEGGAEKAAEDSGGGDDKKS. Residues 830 to 858 are disordered; sequence AKKQEGGAEKAAEDSGGGDDKKSKTCLML. Cysteine methyl ester is present on Cys855. The S-geranylgeranyl cysteine moiety is linked to residue Cys855. The propeptide at 856 to 858 is removed in mature form; sequence LML.

Belongs to the cyclic nucleotide phosphodiesterase family. As to quaternary structure, composed of two alpha' subunits that are associated with 3 smaller proteins of 11, 13, and 15 kDa. Requires a divalent metal cation as cofactor.

It is found in the cell membrane. It carries out the reaction 3',5'-cyclic GMP + H2O = GMP + H(+). As cone-specific cGMP phosphodiesterase, it plays an essential role in light detection and cone phototransduction by rapidly decreasing intracellular levels of cGMP. The protein is Cone cGMP-specific 3',5'-cyclic phosphodiesterase subunit alpha' (PDE6C) of Homo sapiens (Human).